The chain runs to 421 residues: Histidine--tRNA ligase (421 aa).

It belongs to the class-II aminoacyl-tRNA synthetase family. As to quaternary structure, homodimer.

It localises to the cytoplasm. The catalysed reaction is tRNA(His) + L-histidine + ATP = L-histidyl-tRNA(His) + AMP + diphosphate + H(+). This Fervidobacterium nodosum (strain ATCC 35602 / DSM 5306 / Rt17-B1) protein is Histidine--tRNA ligase.